The sequence spans 218 residues: Small ribosomal subunit protein uS3c (218 aa).

Residues 47–118 (VQKNMRISSG…RLNIAITRVA (72 aa)) enclose the KH type-2 domain.

This sequence belongs to the universal ribosomal protein uS3 family. In terms of assembly, part of the 30S ribosomal subunit.

The protein localises to the plastid. Its subcellular location is the chloroplast. In Calycanthus floridus var. glaucus (Eastern sweetshrub), this protein is Small ribosomal subunit protein uS3c (rps3).